Reading from the N-terminus, the 108-residue chain is Glutaredoxin 4 (108 aa).

The Glutaredoxin domain occupies 4–106 (FQKIKKQIQD…KLILKVKKKY (103 aa)). Glutathione is bound at residue K21. C29 lines the [2Fe-2S] cluster pocket. Glutathione contacts are provided by residues R58, F70, and 83-84 (CS).

It belongs to the glutaredoxin family. Monothiol subfamily. In terms of assembly, homodimer.

It is found in the cytoplasm. Its function is as follows. Monothiol glutaredoxin involved in the biogenesis of iron-sulfur clusters. The polypeptide is Glutaredoxin 4 (grxD) (Buchnera aphidicola subsp. Acyrthosiphon pisum (strain APS) (Acyrthosiphon pisum symbiotic bacterium)).